Here is a 354-residue protein sequence, read N- to C-terminus: MKKIVFTGGGTVGHVTLNLLLIPRFLEEGWEVHYIGDGNGIEHEQVVKSGLDVHFHSIATGKLRRYFSFQNMLDVFKVGFGVLQSLTIIAKIRPQALFSKGGFVSVPPVIAANLLRVPVFIHESDLTMGLANKIAYKFATTMYSTFEQPASLTKVKHVGAVTKVGQTNDKVTPIQLPEILSHFDKSLPTLLFVGGSGGAKVFNDLISQNSAALTERFNIINLTGDSSLNKLDKNLYRVDYVTELYQPLMDLADVVITRGGSNTLFELIAMQQLHLIVPLGRQASRGDQIENALYAEKKGYSKQIDESQLTFASLLVEVDELLKHKEFYVQNMANSNEIQSVDSFYNLLREDMGR.

Positions 196 and 288 each coordinate UDP-N-acetyl-alpha-D-glucosamine.

It belongs to the glycosyltransferase 28 family. MurG subfamily.

It localises to the cell membrane. It catalyses the reaction Mur2Ac(oyl-L-Ala-gamma-D-Glu-L-Lys-D-Ala-D-Ala)-di-trans,octa-cis-undecaprenyl diphosphate + UDP-N-acetyl-alpha-D-glucosamine = beta-D-GlcNAc-(1-&gt;4)-Mur2Ac(oyl-L-Ala-gamma-D-Glu-L-Lys-D-Ala-D-Ala)-di-trans,octa-cis-undecaprenyl diphosphate + UDP + H(+). It participates in cell wall biogenesis; peptidoglycan biosynthesis. In terms of biological role, cell wall formation. Catalyzes the transfer of a GlcNAc subunit on undecaprenyl-pyrophosphoryl-MurNAc-pentapeptide (lipid intermediate I) to form undecaprenyl-pyrophosphoryl-MurNAc-(pentapeptide)GlcNAc (lipid intermediate II). The sequence is that of UDP-N-acetylglucosamine--N-acetylmuramyl-(pentapeptide) pyrophosphoryl-undecaprenol N-acetylglucosamine transferase from Streptococcus suis (strain 98HAH33).